A 235-amino-acid chain; its full sequence is Triosephosphate isomerase (235 aa).

7 to 9 (NFK) lines the substrate pocket. His92 (electrophile) is an active-site residue. Glu161 (proton acceptor) is an active-site residue. The substrate site is built by Gly167 and Ser197.

It belongs to the triosephosphate isomerase family. In terms of assembly, homodimer.

It localises to the cytoplasm. It catalyses the reaction D-glyceraldehyde 3-phosphate = dihydroxyacetone phosphate. Its pathway is carbohydrate biosynthesis; gluconeogenesis. It participates in carbohydrate degradation; glycolysis; D-glyceraldehyde 3-phosphate from glycerone phosphate: step 1/1. In terms of biological role, involved in the gluconeogenesis. Catalyzes stereospecifically the conversion of dihydroxyacetone phosphate (DHAP) to D-glyceraldehyde-3-phosphate (G3P). The sequence is that of Triosephosphate isomerase from Helicobacter hepaticus (strain ATCC 51449 / 3B1).